The primary structure comprises 176 residues: Caltractin (176 aa).

The interval 1–27 (MNRAAIAAGKPSGSISTGKPRRKTRAE) is disordered. 4 consecutive EF-hand domains span residues 31–66 (EMKH…LGFD), 67–102 (VKKE…KISN), 104–139 (DPTE…LSEN), and 140–175 (ISDE…TSAF). Positions 44, 46, 48, 50, and 55 each coordinate Ca(2+). 5 residues coordinate Ca(2+): Asp153, Asp155, Asp157, Glu159, and Asp164.

Belongs to the centrin family. Monomer.

The protein resides in the cytoplasm. It is found in the cytoskeleton. The protein localises to the microtubule organizing center. It localises to the centrosome. Functionally, plays a fundamental role in microtubule-organizing center structure and function. In Giardia intestinalis (Giardia lamblia), this protein is Caltractin (CAL).